The primary structure comprises 205 residues: SCO2-like protein RP587 (205 aa).

Residues Cys82, Cys86, and His172 each coordinate Cu cation.

It belongs to the SCO1/2 family.

The polypeptide is SCO2-like protein RP587 (Rickettsia prowazekii (strain Madrid E)).